A 481-amino-acid polypeptide reads, in one-letter code: Glutamyl-tRNA(Gln) amidotransferase subunit A (481 aa).

Active-site charge relay system residues include Lys74 and Ser149. The active-site Acyl-ester intermediate is Ser173.

This sequence belongs to the amidase family. GatA subfamily. In terms of assembly, heterotrimer of A, B and C subunits.

The catalysed reaction is L-glutamyl-tRNA(Gln) + L-glutamine + ATP + H2O = L-glutaminyl-tRNA(Gln) + L-glutamate + ADP + phosphate + H(+). Its function is as follows. Allows the formation of correctly charged Gln-tRNA(Gln) through the transamidation of misacylated Glu-tRNA(Gln) in organisms which lack glutaminyl-tRNA synthetase. The reaction takes place in the presence of glutamine and ATP through an activated gamma-phospho-Glu-tRNA(Gln). This Francisella tularensis subsp. tularensis (strain WY96-3418) protein is Glutamyl-tRNA(Gln) amidotransferase subunit A.